A 231-amino-acid polypeptide reads, in one-letter code: Protein HHL1, chloroplastic (231 aa).

Residues 1–39 (MEVSMSLNALTRLPLKNTGRFEEVGLARHSLFSSRTACR) constitute a chloroplast transit peptide. A helical membrane pass occupies residues 93-113 (YLWYPLSIIAGGTTAKIMVAA). A disordered region spans residues 206 to 231 (SFGKLSSLNPGSDEKTEETSDEKAKA). A compositionally biased stretch (basic and acidic residues) spans 217-231 (SDEKTEETSDEKAKA).

In terms of assembly, interacts with psbB, psbC and LQY1, but not with psbA or psbD.

The protein resides in the plastid. The protein localises to the chloroplast thylakoid membrane. Its function is as follows. Involved in photoprotection. Forms a complex with LQY1 that is involved in the repair and reassembly cycle of the PSII-LHCII supercomplex under high-light conditions. May function in guiding the release of psbC from PSII core monomers. This is Protein HHL1, chloroplastic from Arabidopsis thaliana (Mouse-ear cress).